The chain runs to 235 residues: Large ribosomal subunit protein uL2 (235 aa).

Positions 197–218 (VAMNPVDHPHGGGEGKTSGGRH) are disordered.

It belongs to the universal ribosomal protein uL2 family. As to quaternary structure, part of the 50S ribosomal subunit. Forms a bridge to the 30S subunit in the 70S ribosome.

Functionally, one of the primary rRNA binding proteins. Required for association of the 30S and 50S subunits to form the 70S ribosome, for tRNA binding and peptide bond formation. It has been suggested to have peptidyltransferase activity; this is somewhat controversial. Makes several contacts with the 16S rRNA in the 70S ribosome. The polypeptide is Large ribosomal subunit protein uL2 (rplB) (Carsonella ruddii (strain PV)).